Here is a 173-residue protein sequence, read N- to C-terminus: Shikimate kinase (173 aa).

Residue 14–19 (GAGKST) participates in ATP binding. Residue Ser18 coordinates Mg(2+). 3 residues coordinate substrate: Asp36, Arg60, and Gly82. Lys120 is an ATP binding site. Arg140 provides a ligand contact to substrate.

The protein belongs to the shikimate kinase family. In terms of assembly, monomer. Mg(2+) is required as a cofactor.

It is found in the cytoplasm. The enzyme catalyses shikimate + ATP = 3-phosphoshikimate + ADP + H(+). It participates in metabolic intermediate biosynthesis; chorismate biosynthesis; chorismate from D-erythrose 4-phosphate and phosphoenolpyruvate: step 5/7. Catalyzes the specific phosphorylation of the 3-hydroxyl group of shikimic acid using ATP as a cosubstrate. The protein is Shikimate kinase (aroK) of Wigglesworthia glossinidia brevipalpis.